A 122-amino-acid chain; its full sequence is Small ribosomal subunit protein uS13c (122 aa).

It belongs to the universal ribosomal protein uS13 family. As to quaternary structure, part of the 30S ribosomal subunit.

The protein resides in the plastid. The protein localises to the chloroplast. In terms of biological role, located at the top of the head of the 30S subunit, it contacts several helices of the 16S rRNA. The sequence is that of Small ribosomal subunit protein uS13c from Cyanidium caldarium (Red alga).